A 265-amino-acid polypeptide reads, in one-letter code: Putative pyruvate, phosphate dikinase regulatory protein 2 (265 aa).

150-157 (GVSRTSKT) provides a ligand contact to ADP.

Belongs to the pyruvate, phosphate/water dikinase regulatory protein family. PDRP subfamily.

It catalyses the reaction N(tele)-phospho-L-histidyl/L-threonyl-[pyruvate, phosphate dikinase] + ADP = N(tele)-phospho-L-histidyl/O-phospho-L-threonyl-[pyruvate, phosphate dikinase] + AMP + H(+). The enzyme catalyses N(tele)-phospho-L-histidyl/O-phospho-L-threonyl-[pyruvate, phosphate dikinase] + phosphate + H(+) = N(tele)-phospho-L-histidyl/L-threonyl-[pyruvate, phosphate dikinase] + diphosphate. In terms of biological role, bifunctional serine/threonine kinase and phosphorylase involved in the regulation of the pyruvate, phosphate dikinase (PPDK) by catalyzing its phosphorylation/dephosphorylation. The sequence is that of Putative pyruvate, phosphate dikinase regulatory protein 2 from Latilactobacillus sakei subsp. sakei (strain 23K) (Lactobacillus sakei subsp. sakei).